A 335-amino-acid chain; its full sequence is COP9 signalosome complex subunit 5 (335 aa).

The MPN domain maps to 51–187 (VRISAVALLK…IGAFRTFPKD (137 aa)). Residues His134, His136, and Asp147 each coordinate Zn(2+). The short motif at 134–147 (HSHPGYGCWLSGID) is the JAMM motif element.

The protein belongs to the peptidase M67A family. CSN5 subfamily. In terms of assembly, component of the COP9 signalosome (CSN) complex.

Its subcellular location is the cytoplasm. The protein localises to the nucleus. In terms of biological role, catalytic component of the COP9 signalosome (CSN) complex that acts as an regulator of the ubiquitin (Ubl) conjugation pathway by mediating the deneddylation of the cullin subunit of SCF-type E3 ubiquitin-protein ligase complexes. The CSN complex seems to link protein degradation to sexual development. Required for fruit body formation. This chain is COP9 signalosome complex subunit 5 (rri1), found in Emericella nidulans (strain FGSC A4 / ATCC 38163 / CBS 112.46 / NRRL 194 / M139) (Aspergillus nidulans).